The following is a 213-amino-acid chain: Thymidylate kinase (213 aa).

Residue 10–17 participates in ATP binding; sequence GLEGAGKT.

Belongs to the thymidylate kinase family.

The catalysed reaction is dTMP + ATP = dTDP + ADP. Its function is as follows. Phosphorylation of dTMP to form dTDP in both de novo and salvage pathways of dTTP synthesis. This chain is Thymidylate kinase, found in Salmonella choleraesuis (strain SC-B67).